Here is a 106-residue protein sequence, read N- to C-terminus: Transcription initiation factor IIA subunit 2 (106 aa).

This sequence belongs to the TFIIA subunit 2 family. TFIIA is a heterodimer of the large unprocessed subunit 1 and a small subunit gamma. It was originally believed to be a heterotrimer of an alpha, a beta and a gamma subunit.

Its subcellular location is the nucleus. In terms of biological role, TFIIA is a component of the transcription machinery of RNA polymerase II and plays an important role in transcriptional activation. TFIIA in a complex with TBP mediates transcriptional activity. Protein involved in the resistance to X.oryzae. The chain is Transcription initiation factor IIA subunit 2 (TFIIAy) from Oryza sativa subsp. indica (Rice).